Here is a 334-residue protein sequence, read N- to C-terminus: Malate dehydrogenase, cytoplasmic (334 aa).

S2 carries the post-translational modification N-acetylserine. NAD(+)-binding positions include 11-17 and D42; that span reads GAAGQIA. The substrate site is built by R92 and R98. N105 provides a ligand contact to NAD(+). At K110 the chain carries N6-succinyllysine. Q112 serves as a coordination point for NAD(+). An N6-acetyllysine mark is found at K118 and K121. 129 to 131 serves as a coordination point for NAD(+); that stretch reads VGN. Positions 131 and 162 each coordinate substrate. Residue H187 is the Proton acceptor of the active site. K214 is modified (N6-succinyllysine). S217 bears the Phosphoserine mark. Omega-N-methylarginine is present on R230. A Phosphoserine modification is found at S241. K298 carries the N6-acetyllysine; alternate modification. Position 298 is an N6-succinyllysine; alternate (K298). Phosphoserine is present on S309. Position 318 is an N6-succinyllysine (K318). Phosphoserine occurs at positions 332 and 333.

This sequence belongs to the LDH/MDH superfamily. MDH type 2 family. Homodimer. ISGylated. In terms of processing, acetylation at Lys-118 dramatically enhances enzymatic activity and promotes adipogenic differentiation.

It is found in the cytoplasm. Its subcellular location is the cytosol. The catalysed reaction is (S)-malate + NAD(+) = oxaloacetate + NADH + H(+). It carries out the reaction (2R)-2-hydroxy-3-(4-hydroxyphenyl)propanoate + NAD(+) = 3-(4-hydroxyphenyl)pyruvate + NADH + H(+). It catalyses the reaction (S)-2-hydroxyglutarate + NAD(+) = 2-oxoglutarate + NADH + H(+). Catalyzes the reduction of aromatic alpha-keto acids in the presence of NADH. Plays essential roles in the malate-aspartate shuttle and the tricarboxylic acid cycle, important in mitochondrial NADH supply for oxidative phosphorylation. Catalyzes the reduction of 2-oxoglutarate to 2-hydroxyglutarate, leading to elevated reactive oxygen species (ROS). This Rattus norvegicus (Rat) protein is Malate dehydrogenase, cytoplasmic (Mdh1).